Reading from the N-terminus, the 443-residue chain is Probable D-serine dehydratase (443 aa).

At lysine 118 the chain carries N6-(pyridoxal phosphate)lysine.

The protein belongs to the serine/threonine dehydratase family. DsdA subfamily. Pyridoxal 5'-phosphate is required as a cofactor.

It catalyses the reaction D-serine = pyruvate + NH4(+). This Vibrio parahaemolyticus serotype O3:K6 (strain RIMD 2210633) protein is Probable D-serine dehydratase.